Here is a 151-residue protein sequence, read N- to C-terminus: Copper transporter 3 (151 aa).

2 helical membrane-spanning segments follow: residues 52-72 (LKMY…SECL) and 103-123 (YLVM…AMAG).

The protein belongs to the copper transporter (Ctr) (TC 1.A.56) family. SLC31A subfamily. Highly expressed in stems and at lower levels in leaves and flowers.

The protein localises to the membrane. Involved in the transport of copper. This is Copper transporter 3 (COPT3) from Arabidopsis thaliana (Mouse-ear cress).